A 266-amino-acid polypeptide reads, in one-letter code: MAAIRMGKLTTMPAGLIYASVSVHAAKEEESKKQLVKPEQLPIYTAPPLQSKYVEEQPGHLQMGFASIRTATGCYIGWCKGVYVFVKNGIMDTVQFGKDAYVYMKNPPRDFLPKMGVITVSGLAGLVSARKGSKFKKITYPLGLATLGATVCYPVQSVIIAKVTAKKIYATSQQIFGAVKSLWTKSSKEESLPKPKEKTKLGSSSEIEVPAKTTHVLKHSVPLPTELSSEAKTKSESTSDVQISEVGGKIIGTWGPNVTNSGVLRI.

A mitochondrion-targeting transit peptide spans 1 to 27 (MAAIRMGKLTTMPAGLIYASVSVHAAK). Topologically, residues 28 to 110 (EEESKKQLVK…YVYMKNPPRD (83 aa)) are mitochondrial intermembrane. A helical transmembrane segment spans residues 111 to 129 (FLPKMGVITVSGLAGLVSA). Over 130 to 137 (RKGSKFKK) the chain is Mitochondrial matrix. A helical transmembrane segment spans residues 138–155 (ITYPLGLATLGATVCYPV). Topologically, residues 156-266 (QSVIIAKVTA…NVTNSGVLRI (111 aa)) are mitochondrial intermembrane. Residue Ser204 is modified to Phosphoserine.

It belongs to the apolipoprotein O/MICOS complex subunit Mic27 family. Component of the mitochondrial contact site and cristae organizing system (MICOS) complex, composed of at least MICOS10/MIC10, CHCHD3/MIC19, CHCHD6/MIC25, APOOL/MIC27, IMMT/MIC60, APOO/MIC23/MIC26 and MICOS13/MIC13. This complex was also known under the names MINOS or MitOS complex. The MICOS complex associates with mitochondrial outer membrane proteins SAMM50, MTX1 and MTX2 (together described as components of the mitochondrial outer membrane sorting assembly machinery (SAM) complex) and DNAJC11, mitochondrial inner membrane protein TMEM11 and with HSPA9. The MICOS and SAM complexes together with DNAJC11 are part of a large protein complex spanning both membranes termed the mitochondrial intermembrane space bridging (MIB) complex. Interacts with MICOS10/MIC10, IMMT/MIC60 and APOO/MIC23/MIC26.

It is found in the mitochondrion inner membrane. Its subcellular location is the mitochondrion. Its function is as follows. Component of the MICOS complex, a large protein complex of the mitochondrial inner membrane that plays crucial roles in the maintenance of crista junctions, inner membrane architecture, and formation of contact sites to the outer membrane. Specifically binds to cardiolipin (in vitro) but not to the precursor lipid phosphatidylglycerol. Plays a crucial role in crista junction formation and mitochondrial function. The sequence is that of MICOS complex subunit MIC27 (APOOL) from Pongo abelii (Sumatran orangutan).